We begin with the raw amino-acid sequence, 248 residues long: Ethylene-responsive transcription factor ERF026 (248 aa).

A DNA-binding region (AP2/ERF) is located at residues 89–145 (VYRGIRCRSGKWVSEIREPKKTTRVWLGTYPTPEMAAAAYDVAALALKGGDTLLNFP). Positions 225-248 (PPWMGSPPSDDSPENSDGESLWSY) are disordered.

This sequence belongs to the AP2/ERF transcription factor family. ERF subfamily.

It localises to the nucleus. Probably acts as a transcriptional activator. Binds to the GCC-box pathogenesis-related promoter element. May be involved in the regulation of gene expression by stress factors and by components of stress signal transduction pathways. In Arabidopsis thaliana (Mouse-ear cress), this protein is Ethylene-responsive transcription factor ERF026 (ERF026).